Reading from the N-terminus, the 313-residue chain is NAD-capped RNA hydrolase NudC (313 aa).

Residue arginine 111 participates in substrate binding. One can recognise a Nudix hydrolase domain in the interval 168–293; the sequence is PRIDPAVICL…DWSSASESKL (126 aa). Positions 202, 218, and 222 each coordinate a divalent metal cation. The Nudix box signature appears at 203–224; sequence GFVEAGESFEVCVAREIREEIG. A substrate-binding site is contributed by 236–243; it reads QQWPFPRS. Glutamate 264 is an a divalent metal cation binding site.

It belongs to the Nudix hydrolase family. NudC subfamily. In terms of assembly, homodimer. Requires Mg(2+) as cofactor. The cofactor is Mn(2+).

It carries out the reaction a 5'-end NAD(+)-phospho-ribonucleoside in mRNA + H2O = a 5'-end phospho-adenosine-phospho-ribonucleoside in mRNA + beta-nicotinamide D-ribonucleotide + 2 H(+). The enzyme catalyses NAD(+) + H2O = beta-nicotinamide D-ribonucleotide + AMP + 2 H(+). The catalysed reaction is NADH + H2O = reduced beta-nicotinamide D-ribonucleotide + AMP + 2 H(+). Functionally, mRNA decapping enzyme that specifically removes the nicotinamide adenine dinucleotide (NAD) cap from a subset of mRNAs by hydrolyzing the diphosphate linkage to produce nicotinamide mononucleotide (NMN) and 5' monophosphate mRNA. The NAD-cap is present at the 5'-end of some mRNAs and stabilizes RNA against 5'-processing. Has preference for mRNAs with a 5'-end purine. Catalyzes the hydrolysis of a broad range of dinucleotide pyrophosphates. The chain is NAD-capped RNA hydrolase NudC from Mycobacterium tuberculosis (strain ATCC 25177 / H37Ra).